A 507-amino-acid chain; its full sequence is Archaeal-type glutamate synthase [NADPH] (507 aa).

4Fe-4S ferredoxin-type domains lie at 10–39 (FVVE…YDEN) and 41–70 (NRVY…VRRN). Residues Cys-19, Cys-22, Cys-25, Cys-29, Cys-50, Cys-53, Cys-56, and Cys-60 each coordinate [4Fe-4S] cluster.

This sequence belongs to the glutamate synthase family. Requires FMN as cofactor.

It catalyses the reaction 2 L-glutamate + NADP(+) = L-glutamine + 2-oxoglutarate + NADPH + H(+). The chain is Archaeal-type glutamate synthase [NADPH] from Thermotoga neapolitana (strain ATCC 49049 / DSM 4359 / NBRC 107923 / NS-E).